The primary structure comprises 305 residues: MVKTKGNQKIVGMHPRNVLRTQPDYTKMAIKYKDFRQQCQLELNGKVSVNFRNEKTLRELTKMLLKEYYDLDVDFAPGSLVPTLALRLNYILWLEDLMEPLNLQNIRGIDIGCGSSCIYSLLGAKKNGWHMLALESKPQNIEYAKENVKRNHMESLIEVYAQPDNTNIFKSYFEQDQQQLQYQFCLCNPPFFDSNLPNPLGGNTRNPERRPAPNNARTGSQEELTCVGGEVQFVQRIIDESLENKERVRIFTTMLGVKANVPRILDYLKELQVANVSTTEFHQGHTTRWAVAWSFHSEPLQQGTT.

5 residues coordinate S-adenosyl-L-methionine: R87, G112, E135, T166, and N188. A disordered region spans residues 197-221 (PNPLGGNTRNPERRPAPNNARTGSQ).

It belongs to the methyltransferase superfamily. METTL16/RlmF family.

The enzyme catalyses adenosine in U6 snRNA + S-adenosyl-L-methionine = N(6)-methyladenosine in U6 snRNA + S-adenosyl-L-homocysteine + H(+). Functionally, RNA N6-methyltransferase that mediates N6-methylation of adenine of U6 small nuclear RNA (U6 snRNA). The polypeptide is U6 small nuclear RNA (adenine-(43)-N(6))-methyltransferase (Drosophila melanogaster (Fruit fly)).